Reading from the N-terminus, the 173-residue chain is uncharacterized protein (173 aa).

This is an uncharacterized protein from Saccharomyces cerevisiae (strain ATCC 204508 / S288c) (Baker's yeast).